The primary structure comprises 37 residues: Large ribosomal subunit protein bL36 (37 aa).

The protein belongs to the bacterial ribosomal protein bL36 family.

The chain is Large ribosomal subunit protein bL36 from Acidovorax ebreus (strain TPSY) (Diaphorobacter sp. (strain TPSY)).